Here is a 95-residue protein sequence, read N- to C-terminus: Citrate lyase acyl carrier protein (95 aa).

An O-(phosphoribosyl dephospho-coenzyme A)serine modification is found at Ser-14.

It belongs to the CitD family. As to quaternary structure, oligomer with a subunit composition of (alpha,beta,gamma)6.

Its subcellular location is the cytoplasm. Functionally, covalent carrier of the coenzyme of citrate lyase. The polypeptide is Citrate lyase acyl carrier protein (Haemophilus influenzae (strain PittEE)).